A 218-amino-acid polypeptide reads, in one-letter code: MEPKFWQERWARNQIGFHLPEVNPYLLRHWSHLSLADDAKVLVPLCGKSLDLMWLASHGLRVMGVELSEQAVETFFSEQSLTPHITRRGAFTVYQADLLEVWCGDFFALGAEDLADCTALYDRAALIALPPLMRAQYAEHLNTLLRPGCQGLLVTLDYDQTQKAGPPFAVTDDEVAVLFGLKWTLEVLEARDILGESWKFVQDGVTRLDERVYRLVMR.

Positions 10, 45, 66, and 123 each coordinate S-adenosyl-L-methionine.

It belongs to the class I-like SAM-binding methyltransferase superfamily. TPMT family.

It is found in the cytoplasm. It carries out the reaction S-adenosyl-L-methionine + a thiopurine = S-adenosyl-L-homocysteine + a thiopurine S-methylether.. This is Thiopurine S-methyltransferase from Pseudomonas fluorescens (strain SBW25).